Consider the following 480-residue polypeptide: Immune evasion protein OPG047 (480 aa).

The 81-residue stretch at 10 to 90 (CKNILALSMT…SYTGKVYIDS (81 aa)) folds into the BTB domain. One can recognise a BACK domain in the interval 125–223 (CVECYMMGIE…NYLSPRGINN (99 aa)). 5 Kelch repeats span residues 273–319 (VVYL…PANN), 320–363 (KLYV…SINN), 365–408 (IYVM…VFGR), 410–447 (LFLV…IVDN), and 448–480 (KLLL…WDGK).

Belongs to the orthopoxvirus OPG047 family.

In terms of biological role, might have a role in the suppression of host immune response. In Vaccinia virus (strain Copenhagen) (VACV), this protein is Immune evasion protein OPG047 (OPG047).